A 227-amino-acid polypeptide reads, in one-letter code: Phosphoribosylformylglycinamidine synthase subunit PurQ (227 aa).

Residues 3-225 (FAVIVFPGSN…LKQWRETYVV (223 aa)) form the Glutamine amidotransferase type-1 domain. C86 serves as the catalytic Nucleophile. Catalysis depends on residues H194 and E196.

As to quaternary structure, part of the FGAM synthase complex composed of 1 PurL, 1 PurQ and 2 PurS subunits.

It is found in the cytoplasm. It carries out the reaction N(2)-formyl-N(1)-(5-phospho-beta-D-ribosyl)glycinamide + L-glutamine + ATP + H2O = 2-formamido-N(1)-(5-O-phospho-beta-D-ribosyl)acetamidine + L-glutamate + ADP + phosphate + H(+). The enzyme catalyses L-glutamine + H2O = L-glutamate + NH4(+). It functions in the pathway purine metabolism; IMP biosynthesis via de novo pathway; 5-amino-1-(5-phospho-D-ribosyl)imidazole from N(2)-formyl-N(1)-(5-phospho-D-ribosyl)glycinamide: step 1/2. Functionally, part of the phosphoribosylformylglycinamidine synthase complex involved in the purines biosynthetic pathway. Catalyzes the ATP-dependent conversion of formylglycinamide ribonucleotide (FGAR) and glutamine to yield formylglycinamidine ribonucleotide (FGAM) and glutamate. The FGAM synthase complex is composed of three subunits. PurQ produces an ammonia molecule by converting glutamine to glutamate. PurL transfers the ammonia molecule to FGAR to form FGAM in an ATP-dependent manner. PurS interacts with PurQ and PurL and is thought to assist in the transfer of the ammonia molecule from PurQ to PurL. The protein is Phosphoribosylformylglycinamidine synthase subunit PurQ of Bacillus thuringiensis (strain Al Hakam).